We begin with the raw amino-acid sequence, 360 residues long: 3-dehydroquinate synthase (360 aa).

NAD(+)-binding positions include 71-76 (DGEQYK), 105-109 (GVVGD), 129-130 (TT), Lys-142, Lys-151, and 169-172 (TLNT). The Zn(2+) site is built by Glu-184, His-248, and His-265.

It belongs to the sugar phosphate cyclases superfamily. Dehydroquinate synthase family. Co(2+) serves as cofactor. It depends on Zn(2+) as a cofactor. Requires NAD(+) as cofactor.

The protein resides in the cytoplasm. The catalysed reaction is 7-phospho-2-dehydro-3-deoxy-D-arabino-heptonate = 3-dehydroquinate + phosphate. It functions in the pathway metabolic intermediate biosynthesis; chorismate biosynthesis; chorismate from D-erythrose 4-phosphate and phosphoenolpyruvate: step 2/7. In terms of biological role, catalyzes the conversion of 3-deoxy-D-arabino-heptulosonate 7-phosphate (DAHP) to dehydroquinate (DHQ). The protein is 3-dehydroquinate synthase of Coxiella burnetii (strain RSA 331 / Henzerling II).